Reading from the N-terminus, the 1554-residue chain is Myosin-2 (1554 aa).

The Myosin N-terminal SH3-like domain occupies 4–57 (EVGTRCWYPDKQQGWIGGEITKHTNLSNKHQLELTLEDNQIVEIESETLDETKD). Residues 70-774 (EATEDLTSLS…MLAYLEKLRS (705 aa)) form the Myosin motor domain. 164–171 (GESGAGKT) lines the ATP pocket. Positions 443-523 (FIGVLDIYGF…LGILSLLDEE (81 aa)) are actin-binding. IQ domains follow at residues 778-798 (HNSSVLIQKKVKAVYYRKKYL), 800-824 (IISSIRNFHSRSEGFLTRQRVDLEF), 825-847 (KTQAAILIQSMVRSTSTRNKTIS), 848-872 (LLSAITRLQSLVRKQLAQKELLQRR), 873-895 (QRDAAVSIQKKIRAFEPRQSFNT), and 896-925 (TRRSTVVVQSLVRKKFAQKKLKDLKTEAKS). Residues 926–1079 (VNHLKEVSYK…IARLQAAVRS (154 aa)) adopt a coiled-coil conformation. The non alpha-helical, tail domain stretch occupies residues 1080–1554 (GVTSSTITST…VTVQESQRTE (475 aa)). Over residues 1082–1093 (TSSTITSTPTAS) the composition is skewed to low complexity. Residues 1082–1109 (TSSTITSTPTASRRFSAHSSVADGTSPR) are disordered. Polar residues predominate over residues 1098 to 1109 (AHSSVADGTSPR). The Dilute domain occupies 1205 to 1480 (AEVLSTIQKL…LNFVADRVKK (276 aa)).

Belongs to the TRAFAC class myosin-kinesin ATPase superfamily. Myosin family. As to quaternary structure, homodimer. Interacts with calmodulin (CMD1) and the myosin light chain MLC1 through its IQ repeats.

Functionally, myosin heavy chain that is required for the cell cycle-regulated transport of various organelles and proteins for their segregation. Functions by binding with its tail domain to receptor proteins on organelles and exerting force with its N-terminal motor domain against actin filaments, thereby transporting its cargo along polarized actin cables. This chain is Myosin-2 (MYO2), found in Lachancea kluyveri (strain ATCC 58438 / CBS 3082 / BCRC 21498 / NBRC 1685 / JCM 7257 / NCYC 543 / NRRL Y-12651) (Yeast).